The following is a 104-amino-acid chain: Protein EPIDERMAL PATTERNING FACTOR 1 (104 aa).

A signal peptide spans 1 to 20; it reads MKSLLLLAFFLSFFFGSLLA. Cystine bridges form between Cys60–Cys94, Cys64–Cys70, Cys67–Cys96, and Cys79–Cys88. N-linked (GlcNAc...) asparagine glycosylation occurs at Asn98.

This sequence belongs to the plant cysteine rich small secretory peptide family. Epidermal patterning factor subfamily. Interacts with ERECTA and ERL1, but not with TMM. Expressed in shoots, but not in roots. Mostly localized in developing leaves, specifically in meristemoids, guard mother cells (GMCs), and young guard cells.

It localises to the secreted. In terms of biological role, controls stomatal patterning. Regulates asymmetric cell division during guard cell differentiation. Mediates stomatal development inhibition. Not cleaved by the protease CRSP (AC Q9LNU1). MEPF1: mobile signal controlling stomatal development in a non-cell-autonomous manner. Uses ERL1 as major receptor. May act by competing with somatogen (AC Q9SV72) for the same receptor, TMM (AC Q9SSD1). This chain is Protein EPIDERMAL PATTERNING FACTOR 1, found in Arabidopsis thaliana (Mouse-ear cress).